A 295-amino-acid polypeptide reads, in one-letter code: Putative S-adenosyl-L-methionine-dependent methyltransferase Mvan_0910 (295 aa).

S-adenosyl-L-methionine contacts are provided by residues aspartate 126 and 155-156 (DL).

This sequence belongs to the UPF0677 family.

Exhibits S-adenosyl-L-methionine-dependent methyltransferase activity. The protein is Putative S-adenosyl-L-methionine-dependent methyltransferase Mvan_0910 of Mycolicibacterium vanbaalenii (strain DSM 7251 / JCM 13017 / BCRC 16820 / KCTC 9966 / NRRL B-24157 / PYR-1) (Mycobacterium vanbaalenii).